A 363-amino-acid polypeptide reads, in one-letter code: Chorismate synthase (363 aa).

An NADP(+)-binding site is contributed by Arg48. Residues 125-127 (RSS), 238-239 (NA), Gly278, 293-297 (KPTAS), and Arg319 each bind FMN.

This sequence belongs to the chorismate synthase family. Homotetramer. Requires FMNH2 as cofactor.

The catalysed reaction is 5-O-(1-carboxyvinyl)-3-phosphoshikimate = chorismate + phosphate. It functions in the pathway metabolic intermediate biosynthesis; chorismate biosynthesis; chorismate from D-erythrose 4-phosphate and phosphoenolpyruvate: step 7/7. Its function is as follows. Catalyzes the anti-1,4-elimination of the C-3 phosphate and the C-6 proR hydrogen from 5-enolpyruvylshikimate-3-phosphate (EPSP) to yield chorismate, which is the branch point compound that serves as the starting substrate for the three terminal pathways of aromatic amino acid biosynthesis. This reaction introduces a second double bond into the aromatic ring system. The sequence is that of Chorismate synthase from Acinetobacter baumannii (strain SDF).